The primary structure comprises 93 residues: Probable endoribonuclease MazF1 (93 aa).

It belongs to the PemK/MazF family. As to quaternary structure, forms a complex with cognate antitoxin MazE1.

In terms of biological role, toxic component of a type II toxin-antitoxin (TA) system, its cognate antitoxin is MazE1. Probably an endoribonuclease. This Mycobacterium tuberculosis (strain ATCC 25618 / H37Rv) protein is Probable endoribonuclease MazF1 (mazF1).